The primary structure comprises 211 residues: Molybdenum cofactor guanylyltransferase (211 aa).

Residues 12 to 14 (LAG), Lys-25, Asn-53, Asp-71, and Asp-101 contribute to the GTP site. Asp-101 contacts Mg(2+).

It belongs to the MobA family. As to quaternary structure, monomer. It depends on Mg(2+) as a cofactor.

The protein localises to the cytoplasm. The enzyme catalyses Mo-molybdopterin + GTP + H(+) = Mo-molybdopterin guanine dinucleotide + diphosphate. Transfers a GMP moiety from GTP to Mo-molybdopterin (Mo-MPT) cofactor (Moco or molybdenum cofactor) to form Mo-molybdopterin guanine dinucleotide (Mo-MGD) cofactor. The polypeptide is Molybdenum cofactor guanylyltransferase (Acidovorax ebreus (strain TPSY) (Diaphorobacter sp. (strain TPSY))).